The sequence spans 1528 residues: DNA topoisomerase 2-alpha (1528 aa).

Residue Met-1 is modified to N-acetylmethionine. Ser-4 carries the post-translational modification Phosphoserine. Residue Lys-17 forms a Glycyl lysine isopeptide (Lys-Gly) (interchain with G-Cter in SUMO2) linkage. Residues Asn-90, Asn-119, and 147-149 (SSN) each bind ATP. Residues Lys-155 and Lys-156 each participate in a glycyl lysine isopeptide (Lys-Gly) (interchain with G-Cter in SUMO2) cross-link. Residue 160-167 (GRNGYGAK) coordinates ATP. Thr-281 is subject to Phosphothreonine. The tract at residues 341–343 (KKK) is interaction with DNA. Lys-351 is covalently cross-linked (Glycyl lysine isopeptide (Lys-Gly) (interchain with G-Cter in SUMO2)). Residue 375–377 (QTK) participates in ATP binding. Glycyl lysine isopeptide (Lys-Gly) (interchain with G-Cter in SUMO2) cross-links involve residues Lys-385, Lys-396, Lys-415, Lys-417, Lys-424, and Lys-439. Residues 454–571 (CTLILTEGDS…SLLRHRFLEE (118 aa)) form the Toprim domain. Glu-460 lines the Mg(2+) pocket. Glycyl lysine isopeptide (Lys-Gly) (interchain with G-Cter in SUMO2) cross-links involve residues Lys-465, Lys-479, and Lys-528. Mg(2+) contacts are provided by Asp-540 and Asp-542. Residues Lys-583, Lys-598, Lys-613, Lys-621, Lys-624, Lys-631, Lys-638, Lys-654, Lys-661, and Lys-675 each participate in a glycyl lysine isopeptide (Lys-Gly) (interchain with G-Cter in SUMO2) cross-link. Residues 714–1168 (IPSMVDGLKP…SPSDLWKEDL (455 aa)) form the Topo IIA-type catalytic domain. The active-site O-(5'-phospho-DNA)-tyrosine intermediate is the Tyr-804. The interval 989–998 (KLQSSLTCNS) is interaction with DNA. A Glycyl lysine isopeptide (Lys-Gly) (interchain with G-Cter in SUMO2) cross-link involves residue Lys-1074. 2 disordered regions span residues 1090–1118 (KEAQ…AAEA) and 1183–1211 (KQDE…VLPS). Positions 1098–1107 (DEEENEESDT) are enriched in acidic residues. At Ser-1105 the chain carries Phosphoserine; by CK1. Positions 1108–1118 (ETSTSDSAAEA) are enriched in low complexity. Glycyl lysine isopeptide (Lys-Gly) (interchain with G-Cter in SUMO2) cross-links involve residues Lys-1193 and Lys-1201. At Ser-1211 the chain carries Phosphoserine. A Glycyl lysine isopeptide (Lys-Gly) (interchain with G-Cter in SUMO2) cross-link involves residue Lys-1226. The tract at residues 1229-1528 (AEKKIRKKIK…EESDDDDDLF (300 aa)) is disordered. A Glycyl lysine isopeptide (Lys-Gly) (interchain with G-Cter in SUMO1); alternate cross-link involves residue Lys-1238. A Glycyl lysine isopeptide (Lys-Gly) (interchain with G-Cter in SUMO2); alternate cross-link involves residue Lys-1238. Thr-1245 is modified (phosphothreonine). Over residues 1258–1270 (QRIEKKQKKEPGA) the composition is skewed to basic and acidic residues. Residues Lys-1272, Lys-1279, and Lys-1282 each participate in a glycyl lysine isopeptide (Lys-Gly) (interchain with G-Cter in SUMO2) cross-link. Phosphoserine is present on residues Ser-1291, Ser-1293, Ser-1295, and Ser-1298. The span at 1296–1306 (DVSSNESNVDV) shows a compositional bias: low complexity. Position 1323 is a phosphothreonine (Thr-1323). A compositionally biased stretch (acidic residues) spans 1326 to 1345 (LDSDEDFSGLDEKDEDEDFL). Phosphoserine occurs at positions 1328 and 1333. Thr-1350 is subject to Phosphothreonine. Residues Lys-1359 and Lys-1363 each participate in a glycyl lysine isopeptide (Lys-Gly) (interchain with G-Cter in SUMO2) cross-link. Residues Ser-1370 and Ser-1373 each carry the phosphoserine modification. Lys-1382 is covalently cross-linked (Glycyl lysine isopeptide (Lys-Gly) (interchain with G-Cter in SUMO2)). Ser-1384 and Ser-1388 each carry phosphoserine. Lys-1418 is covalently cross-linked (Glycyl lysine isopeptide (Lys-Gly) (interchain with G-Cter in SUMO2); alternate). The residue at position 1418 (Lys-1418) is an N6-acetyllysine; alternate. The segment at 1429 to 1435 (KKRAAPK) is interaction with PLSCR1. Residue Lys-1438 forms a Glycyl lysine isopeptide (Lys-Gly) (interchain with G-Cter in SUMO2); alternate linkage. Lys-1438 is subject to N6-acetyllysine; alternate. Glycyl lysine isopeptide (Lys-Gly) (interchain with G-Cter in SUMO2) cross-links involve residues Lys-1450 and Lys-1455. Residues Ser-1465, Ser-1467, Ser-1470, and Ser-1472 each carry the phosphoserine modification. Residues Lys-1480 and Lys-1488 each participate in a glycyl lysine isopeptide (Lys-Gly) (interchain with G-Cter in SUMO2) cross-link. Basic and acidic residues predominate over residues 1506–1519 (AKSDRARKPIKYLE). Ser-1521 is subject to Phosphoserine.

This sequence belongs to the type II topoisomerase family. Homodimer. Interacts with COPS5. Interacts with RECQL5; this stimulates DNA decatenation. Interacts with SETMAR; stimulates the topoisomerase activity. Interacts with DHX9; this interaction occurs in a E2 enzyme UBE2I- and RNA-dependent manner, negatively regulates DHX9-mediated double-stranded DNA and RNA duplex helicase activity and stimulates TOP2A-mediated supercoiled DNA relaxation activity. Interacts with HNRNPU (via C-terminus); this interaction protects the topoisomerase TOP2A from degradation and positively regulates the relaxation of supercoiled DNA in a RNA-dependent manner. Interacts with MCM3AP. Interacts with ERCC6. Interacts with PLSCR1. Interacts with GCNA; this interaction allows the resolution of topoisomerase II (TOP2A) DNA-protein cross-links. Interacts with POL1RA/RPA1 (via dock II) and UBTF in the context of Pol I complex; may assist Pol I transcription initiation by releasing supercoils occurring during DNA unwinding. Interacts with TPRN; TPRN interacts with a number of DNA damage response proteins, is recruited to sites of DNA damage and may play a role in DNA damage repair. Requires Mg(2+) as cofactor. The cofactor is Mn(2+). Ca(2+) serves as cofactor. Phosphorylation has no effect on catalytic activity. However, phosphorylation at Ser-1105 by CSNK1D/CK1 promotes DNA cleavable complex formation.

The protein resides in the cytoplasm. It localises to the nucleus. It is found in the nucleoplasm. The protein localises to the nucleolus. The catalysed reaction is ATP-dependent breakage, passage and rejoining of double-stranded DNA.. Functionally, key decatenating enzyme that alters DNA topology by binding to two double-stranded DNA molecules, generating a double-stranded break in one of the strands, passing the intact strand through the broken strand, and religating the broken strand. May play a role in regulating the period length of BMAL1 transcriptional oscillation. The chain is DNA topoisomerase 2-alpha (Top2a) from Mus musculus (Mouse).